Consider the following 322-residue polypeptide: Pantothenate kinase (322 aa).

Residue 100 to 107 (GSVAVGKS) coordinates ATP.

Belongs to the prokaryotic pantothenate kinase family.

Its subcellular location is the cytoplasm. It catalyses the reaction (R)-pantothenate + ATP = (R)-4'-phosphopantothenate + ADP + H(+). It participates in cofactor biosynthesis; coenzyme A biosynthesis; CoA from (R)-pantothenate: step 1/5. This is Pantothenate kinase from Brucella abortus (strain 2308).